The chain runs to 398 residues: Cyclin-dependent kinase D-1 (398 aa).

Residues 11-291 (YLKREVLGQG…IQQALKHRYF (281 aa)) form the Protein kinase domain. ATP contacts are provided by residues 17–25 (LGQGTYGVV) and lysine 40. The residue at position 22 (tyrosine 22) is a Phosphotyrosine. Catalysis depends on aspartate 133, which acts as the Proton acceptor. Position 160 is a phosphoserine (serine 160). The residue at position 166 (threonine 166) is a Phosphothreonine. Residues 296–318 (SPTDPLKLPRPVSKQDAKSSDSK) are disordered. A compositionally biased stretch (basic and acidic residues) spans 308–318 (SKQDAKSSDSK).

This sequence belongs to the protein kinase superfamily. CMGC Ser/Thr protein kinase family. CDC2/CDKX subfamily. Autophosphorylated. As to expression, expressed at low levels in suspension cell culture, but not in plant organs.

It is found in the nucleus. The catalysed reaction is L-seryl-[protein] + ATP = O-phospho-L-seryl-[protein] + ADP + H(+). It carries out the reaction L-threonyl-[protein] + ATP = O-phospho-L-threonyl-[protein] + ADP + H(+). It catalyses the reaction [DNA-directed RNA polymerase] + ATP = phospho-[DNA-directed RNA polymerase] + ADP + H(+). This is Cyclin-dependent kinase D-1 (CDKD-1) from Arabidopsis thaliana (Mouse-ear cress).